The primary structure comprises 483 residues: ATP synthase subunit beta (483 aa).

162–169 (GGAGVGKT) contacts ATP.

Belongs to the ATPase alpha/beta chains family. F-type ATPases have 2 components, CF(1) - the catalytic core - and CF(0) - the membrane proton channel. CF(1) has five subunits: alpha(3), beta(3), gamma(1), delta(1), epsilon(1). CF(0) has four main subunits: a(1), b(1), b'(1) and c(9-12).

The protein localises to the cellular thylakoid membrane. The catalysed reaction is ATP + H2O + 4 H(+)(in) = ADP + phosphate + 5 H(+)(out). In terms of biological role, produces ATP from ADP in the presence of a proton gradient across the membrane. The catalytic sites are hosted primarily by the beta subunits. The polypeptide is ATP synthase subunit beta (Synechocystis sp. (strain ATCC 27184 / PCC 6803 / Kazusa)).